Reading from the N-terminus, the 744-residue chain is Collagen alpha-1(VIII) chain (744 aa).

An N-terminal signal peptide occupies residues 1-24 (MAVPPRPLQLLGILFIISLNSVRL). The nonhelical region (NC2) stretch occupies residues 29–118 (AYYGIKPLPP…KGEVPLASLR (90 aa)). A compositionally biased stretch (basic and acidic residues) spans 101-110 (KEVVPKKGKG). Disordered stretches follow at residues 101–395 (KEVV…EPGL), 412–439 (GPKG…GFPG), and 457–590 (GPIG…DMGL). The segment at 119–572 (GEQGPRGEPG…PGPPGPPGPP (454 aa)) is triple-helical region (COL1). Pro residues predominate over residues 129-138 (PRGPPGPPGL). Residues 169–191 (KPGAMGMPGAKGEIGPKGEIGPM) show a composition bias toward low complexity. A compositionally biased stretch (gly residues) spans 204–218 (GLPGIGKPGGPGLPG). Positions 298-307 (PQGLIGVPGV) are enriched in low complexity. Composition is skewed to gly residues over residues 329–338 (GFPGGKGEQG) and 412–421 (GPKGEGGVVG). Low complexity-rich tracts occupy residues 470 to 507 (LPGL…VGPS) and 548 to 557 (PGALGPQGQP). Pro residues predominate over residues 559–579 (LPGPPGPPGPPGPPAVMPTPS). The interval 573–744 (AVMPTPSPQG…SFSGYLLYPM (172 aa)) is nonhelical region (NC1). Residues 611 to 744 (PAYEMPAFTA…SFSGYLLYPM (134 aa)) enclose the C1q domain.

As to quaternary structure, homotrimers, or heterotrimers in association with alpha 2(VIII) type collagens. Four homotrimers can form a tetrahedron stabilized by central interacting C-terminal NC1 trimers. In terms of processing, prolines at the third position of the tripeptide repeating unit (G-X-Y) are hydroxylated in some or all of the chains. Proteolytically cleaved by neutrophil elastase, in vitro. Proteolytic processing produces the C-terminal NC1 domain fragment, vastatin. High levels in calvarium, eye and skin of newborn mice; also in various epithelial, endothelial and mesenchymal cells.

It is found in the secreted. Its subcellular location is the extracellular space. It localises to the extracellular matrix. The protein resides in the basement membrane. Functionally, macromolecular component of the subendothelium. Major component of the Descemet's membrane (basement membrane) of corneal endothelial cells. Also a component of the endothelia of blood vessels. Necessary for migration and proliferation of vascular smooth muscle cells and thus, has a potential role in the maintenance of vessel wall integrity and structure, in particular in atherogenesis. In terms of biological role, vastatin, the C-terminal fragment comprising the NC1 domain, inhibits aortic endothelial cell proliferation and causes cell apoptosis. The protein is Collagen alpha-1(VIII) chain (Col8a1) of Mus musculus (Mouse).